Reading from the N-terminus, the 357-residue chain is Protein pelota homolog (357 aa).

Belongs to the eukaryotic release factor 1 family. Pelota subfamily. As to quaternary structure, monomer. A divalent metal cation is required as a cofactor.

The protein localises to the cytoplasm. Its function is as follows. May function in recognizing stalled ribosomes, interact with stem-loop structures in stalled mRNA molecules, and effect endonucleolytic cleavage of the mRNA. May play a role in the release non-functional ribosomes and degradation of damaged mRNAs. Has endoribonuclease activity. This chain is Protein pelota homolog, found in Methanocella arvoryzae (strain DSM 22066 / NBRC 105507 / MRE50).